Consider the following 418-residue polypeptide: Putative ion-transport protein YfeO (418 aa).

Transmembrane regions (helical) follow at residues 10 to 30 (LLLS…LIVV), 54 to 74 (DSPF…GLVI), 99 to 119 (ALPG…SLGP), 120 to 140 (EHPI…RLLP), 149 to 169 (ILAS…AALI), 186 to 206 (LFAP…FFHP), 223 to 243 (ILSG…AVWC), 258 to 278 (VLML…AGPV), 300 to 320 (DYFL…ASGF), 322 to 342 (GGRI…LHEH), 343 to 363 (VPAV…VLVV), and 371 to 391 (LFMA…CIVM).

This sequence belongs to the chloride channel (TC 2.A.49) family.

It is found in the cell membrane. This is Putative ion-transport protein YfeO from Escherichia coli (strain SMS-3-5 / SECEC).